Reading from the N-terminus, the 297-residue chain is PsbP domain-containing protein 5, chloroplastic (297 aa).

This sequence belongs to the PsbP family.

Its subcellular location is the plastid. It is found in the chloroplast thylakoid lumen. Functionally, involved in strigolactone biosynthesis. The polypeptide is PsbP domain-containing protein 5, chloroplastic (PPD5) (Arabidopsis thaliana (Mouse-ear cress)).